Consider the following 145-residue polypeptide: Ribonuclease P protein component (145 aa).

Over residues Leu120–Ala130 the composition is skewed to low complexity. Positions Leu120 to Leu145 are disordered. The span at His134–Leu145 shows a compositional bias: polar residues.

It belongs to the RnpA family. As to quaternary structure, consists of a catalytic RNA component (M1 or rnpB) and a protein subunit.

It carries out the reaction Endonucleolytic cleavage of RNA, removing 5'-extranucleotides from tRNA precursor.. Functionally, RNaseP catalyzes the removal of the 5'-leader sequence from pre-tRNA to produce the mature 5'-terminus. It can also cleave other RNA substrates such as 4.5S RNA. The protein component plays an auxiliary but essential role in vivo by binding to the 5'-leader sequence and broadening the substrate specificity of the ribozyme. In Xanthomonas oryzae pv. oryzae (strain MAFF 311018), this protein is Ribonuclease P protein component.